We begin with the raw amino-acid sequence, 271 residues long: 5-deoxy-glucuronate isomerase (271 aa).

It belongs to the isomerase IolB family.

It carries out the reaction 5-deoxy-D-glucuronate = 5-dehydro-2-deoxy-D-gluconate. The protein operates within polyol metabolism; myo-inositol degradation into acetyl-CoA; acetyl-CoA from myo-inositol: step 4/7. Functionally, involved in the isomerization of 5-deoxy-glucuronate (5DG) to 5-dehydro-2-deoxy-D-gluconate (DKG or 2-deoxy-5-keto-D-gluconate). The polypeptide is 5-deoxy-glucuronate isomerase (Bacillus subtilis subsp. natto).